We begin with the raw amino-acid sequence, 327 residues long: Serine/threonine-protein phosphatase PP2A catalytic subunit (327 aa).

Residues aspartate 75, histidine 77, aspartate 103, and asparagine 135 each contribute to the Mn(2+) site. Histidine 136 functions as the Proton donor in the catalytic mechanism. Residues histidine 185 and histidine 259 each coordinate Mn(2+). Leucine 327 carries the leucine methyl ester modification.

The protein belongs to the PPP phosphatase family. PP-2A subfamily. Requires Mn(2+) as cofactor.

The enzyme catalyses O-phospho-L-seryl-[protein] + H2O = L-seryl-[protein] + phosphate. It catalyses the reaction O-phospho-L-threonyl-[protein] + H2O = L-threonyl-[protein] + phosphate. In Neurospora crassa (strain ATCC 24698 / 74-OR23-1A / CBS 708.71 / DSM 1257 / FGSC 987), this protein is Serine/threonine-protein phosphatase PP2A catalytic subunit (pph-1).